A 176-amino-acid chain; its full sequence is Ribosome rescue factor SmrB (176 aa).

The 76-residue stretch at 98–173 folds into the Smr domain; that stretch reads LDLHGLTQKQ…GTAALLLLIE (76 aa).

The protein belongs to the SmrB family. Associates with collided ribosomes, but not with correctly translating polysomes.

In terms of biological role, acts as a ribosome collision sensor. Detects stalled/collided disomes (pairs of ribosomes where the leading ribosome is stalled and a second ribosome has collided with it) and endonucleolytically cleaves mRNA at the 5' boundary of the stalled ribosome. Stalled/collided disomes form a new interface (primarily via the 30S subunits) that binds SmrB. Cleaved mRNA becomes available for tmRNA ligation, leading to ribosomal subunit dissociation and rescue of stalled ribosomes. This is Ribosome rescue factor SmrB from Yersinia pseudotuberculosis serotype O:1b (strain IP 31758).